The chain runs to 629 residues: Tudor and KH domain-containing protein homolog (629 aa).

Residues 9–29 traverse the membrane as a helical segment; the sequence is LPIALGLSLVTVTAFVAYYVL. KH domains are found at residues 46–109 and 119–185; these read INTI…ETLI and IMSE…KKLV. A disordered region spans residues 198–240; the sequence is IEQSKRPPRHSSSPPSPCPSPGDRDADADAQGDVDHTRVKYKR. The segment covering 219 to 240 has biased composition (basic and acidic residues); it reads GDRDADADAQGDVDHTRVKYKR. The Tudor domain occupies 297 to 362; the sequence is HVSVGQVVAA…CELRADLLRL (66 aa). Positions 464-526 are disordered; that stretch reads PAPSPRPSPP…GDDSKDKDGI (63 aa).

Belongs to the Tdrkh family. In terms of assembly, interacts with (symmetrically methylated) Siwi. Interacts with (symmetrically methylated) Ago3. Interacts with PNLDC1/trimmer; interaction takes place on the mitochondrial surface and recruits PNLDC1/trimmer to Siwi-bound pre-piRNAs.

Its subcellular location is the mitochondrion outer membrane. Functionally, participates in the primary piRNA biogenesis pathway and is required during spermatogenesis to repress transposable elements and prevent their mobilization, which is essential for the germline integrity. The piRNA metabolic process mediates the repression of transposable elements during meiosis by forming complexes composed of piRNAs and Piwi proteins (Siwi or Ago3) and govern the methylation and subsequent repression of transposons. Required for the final steps of primary piRNA biogenesis by participating in the processing of 31-37 nt intermediates into mature piRNAs: acts by recruiting the exonuclease PNLDC1/trimmer to Siwi-bound pre-piRNAs. This is Tudor and KH domain-containing protein homolog from Bombyx mori (Silk moth).